A 556-amino-acid chain; its full sequence is MDIRRIVLYMALALIGLSLWNAWQIDYPAAQPVEDKTASQLTSDGHLLPQIIPSNAEQPVTLKAEEKASSGKQLIQVKTDVLDVGIDLKNGDIVKGLLLDYPLSVEDKNKPFPLLQNQASQRYVANSSLFVLDGQTPQSLDFDFTSEKEYYELKPDQNQLIVTLNGKSEDGLDVKKEFVFTKGSYLIEVNYKIANTGNSLWKGYFNTQLLRSSPKEDKSSIFHIGSYTGASFSNPGKNRYQKVSFSDMSKSNLDVDAKGGWIAMQQHYFLSAWVPNADSENKFYTLATDKDYTIGAVSQPITVKPKEDKIVGSKLYIGPEITSVLKGISPSLDLTVDYGILWFLSSLLFSLMKAIYTVVGNWGWSIVLVTVLIKLAFYRLSATSYKSMASMRKLQPKLQALRERYGDDKAKISQATMELYKQEKVNPLGGCLPILIQIPVFIALYWVLLESVELRQAPFIFWINDLASADPYHVLPLIMGATMLIQQKLNPAPADPMQAKVMMFLPILFTGLFWNFPSGLVLYWIVNNTLSILQQWYITRKYSDEKPAKKVVATAK.

A run of 5 helical transmembrane segments spans residues I6 to D26, L332 to M352, V358 to Y378, L428 to L448, and V501 to V521.

It belongs to the OXA1/ALB3/YidC family. Type 1 subfamily. Interacts with the Sec translocase complex via SecD. Specifically interacts with transmembrane segments of nascent integral membrane proteins during membrane integration.

It is found in the cell inner membrane. Its function is as follows. Required for the insertion and/or proper folding and/or complex formation of integral membrane proteins into the membrane. Involved in integration of membrane proteins that insert both dependently and independently of the Sec translocase complex, as well as at least some lipoproteins. Aids folding of multispanning membrane proteins. This is Membrane protein insertase YidC from Legionella pneumophila (strain Corby).